A 414-amino-acid polypeptide reads, in one-letter code: Glucose-1-phosphate adenylyltransferase (414 aa).

Alpha-D-glucose 1-phosphate-binding positions include Tyr-99, Gly-164, 181–182 (EK), and Ser-199.

This sequence belongs to the bacterial/plant glucose-1-phosphate adenylyltransferase family. As to quaternary structure, homotetramer.

The enzyme catalyses alpha-D-glucose 1-phosphate + ATP + H(+) = ADP-alpha-D-glucose + diphosphate. The protein operates within glycan biosynthesis; glycogen biosynthesis. Involved in the biosynthesis of ADP-glucose, a building block required for the elongation reactions to produce glycogen. Catalyzes the reaction between ATP and alpha-D-glucose 1-phosphate (G1P) to produce pyrophosphate and ADP-Glc. This chain is Glucose-1-phosphate adenylyltransferase, found in Bifidobacterium longum (strain DJO10A).